The following is a 174-amino-acid chain: MPACRLCLLAAGLLLGLLLFTPISATGTDAEKPGECPQLEPITDCVLECTLDKDCADNRKCCQAGCSSVCSKPNGPSEGELSGTDTKLSETGTTTQSAGLDHTTKPPGGQVSTKPPAVTREGLGVREKQGTCPSVDIPKLGLCEDQCQVDSQCSGNMKCCRNGCGKMACTTPKF.

The signal sequence occupies residues 1 to 25 (MPACRLCLLAAGLLLGLLLFTPISA). In terms of domain architecture, WAP 1 spans 29–74 (DAEKPGECPQLEPITDCVLECTLDKDCADNRKCCQAGCSSVCSKPN). 4 cysteine pairs are disulfide-bonded: Cys-36–Cys-62, Cys-45–Cys-66, Cys-49–Cys-61, and Cys-55–Cys-70. The segment at 68-117 (SVCSKPNGPSEGELSGTDTKLSETGTTTQSAGLDHTTKPPGGQVSTKPPA) is disordered. The span at 83 to 98 (GTDTKLSETGTTTQSA) shows a compositional bias: polar residues. Residues 125–173 (VREKQGTCPSVDIPKLGLCEDQCQVDSQCSGNMKCCRNGCGKMACTTPK) enclose the WAP 2 domain. Cystine bridges form between Cys-132-Cys-160, Cys-143-Cys-164, Cys-147-Cys-159, and Cys-153-Cys-169.

As to quaternary structure, homotrimer; disulfide-linked.

The protein localises to the secreted. In terms of biological role, broad range protease inhibitor. This chain is WAP four-disulfide core domain protein 2 (Wfdc2), found in Mus musculus (Mouse).